Consider the following 262-residue polypeptide: Lysosomal-associated transmembrane protein 5 (262 aa).

5 helical membrane-spanning segments follow: residues 19–39, 64–84, 92–112, 134–154, and 184–204; these read IATT…FIEH, ISSF…LIGV, LLPF…TLLG, FPLM…LCSS, and FIKM…FKVY. Y259 is subject to Phosphotyrosine.

It belongs to the LAPTM4/LAPTM5 transporter family. In terms of assembly, binds to ubiquitin. In terms of tissue distribution, preferentially expressed in adult hematopoietic tissues. High levels in lymphoid and myeloid tissues. Highly expressed in peripheral blood leukocytes, thymus, spleen and lung, followed by placenta, liver and kidney.

It localises to the lysosome membrane. Its function is as follows. May have a special functional role during embryogenesis and in adult hematopoietic cells. The protein is Lysosomal-associated transmembrane protein 5 (LAPTM5) of Homo sapiens (Human).